The primary structure comprises 424 residues: MGCGTSKVLPEPPKDVQLDLVKKVEPFSGTKSDVYKHFITEVDSVGPLKGGFPAASQGANPSPGTPRTSHTEPPSEPPRRARVAKYRAKFDPRVTAKYDIKALIGRGSFSRVVRVEHRATRQPYAIKMIETKYREGREVCESELRVLRRVRHANIIQLVEVFETQERVYMVMELATGGELFDRIIAKGSFTERDATRVLQMVLDGVRYLHALGITHRDLKPENLLYYHPGTDSKIIITDFGLASARKKGDDCLMKTTCGTPEYIAPEVLVRKPYTNSVDMWALGVIAYILLSGTMPFEDDNRTRLYRQILRGKYSYSGEPWPSVSNLAKDFIDRLLTVDPGARMTALQALRHPWVVSMAASSSMKNLHRSISQNLLKRASSRCQSTKSAQSTRSSRSTRSNKSRRVRERELRELNLRYQQQYNG.

Gly2 is lipidated: N-myristoyl glycine. Cys3 carries the S-palmitoyl cysteine lipid modification. Residues 49–81 (KGGFPAASQGANPSPGTPRTSHTEPPSEPPRRA) form a disordered region. Over residues 57–72 (QGANPSPGTPRTSHTE) the composition is skewed to polar residues. In terms of domain architecture, Protein kinase spans 98–355 (YDIKALIGRG…ALQALRHPWV (258 aa)). Residues 104–112 (IGRGSFSRV) and Lys127 each bind ATP. The active-site Proton acceptor is the Asp218. Positions 378 to 407 (RASSRCQSTKSAQSTRSSRSTRSNKSRRVR) are disordered. A phosphoserine; by autocatalysis mark is found at Ser380 and Ser381. The span at 385–398 (STKSAQSTRSSRST) shows a compositional bias: low complexity.

It belongs to the protein kinase superfamily. CAMK Ser/Thr protein kinase family. Homodimer. Autophosphorylated on serine residues. In terms of processing, myristoylated. Required for membrane association. Prerequisite for palmitoylation to occur. Post-translationally, palmitoylated.

It is found in the golgi apparatus. The protein localises to the cytoplasm. Its subcellular location is the cytoskeleton. It localises to the microtubule organizing center. The protein resides in the centrosome. It is found in the nucleus speckle. The protein localises to the endoplasmic reticulum membrane. Its subcellular location is the cell membrane. The catalysed reaction is L-seryl-[protein] + ATP = O-phospho-L-seryl-[protein] + ADP + H(+). It catalyses the reaction L-threonyl-[protein] + ATP = O-phospho-L-threonyl-[protein] + ADP + H(+). With respect to regulation, activity depends on Ca(2+) concentration. May be a SFC-associated serine kinase (splicing factor compartment-associated serine kinase) with a role in intranuclear SR protein (non-snRNP splicing factors containing a serine/arginine-rich domain) trafficking and pre-mRNA processing. The protein is Serine/threonine-protein kinase H1 (PSKH1) of Bos taurus (Bovine).